We begin with the raw amino-acid sequence, 475 residues long: Tryptophan--tRNA ligase, cytoplasmic (475 aa).

Positions 12–68 constitute a WHEP-TRS domain; the sequence is SPQELFSSIAAQGELVKSLKARKAPKEEIDSAVKMLLSLKTSYKEAMGEDYKADCPP. The tract at residues 61 to 87 is disordered; it reads DYKADCPPGNSTPDSHGDPEAVDDKED. The residue at position 158 (lysine 158) is an N6-succinyllysine. The 'HIGH' region signature appears at 168 to 177; the sequence is PSSEAMHVGH. Residues 353–357 carry the 'KMSKS' region motif; the sequence is KMSAS. Residue serine 355 is modified to Phosphoserine.

It belongs to the class-I aminoacyl-tRNA synthetase family. As to quaternary structure, homodimer. Interacts with oxidized form of GAPDH. Proteolytic cleavage generates 2 forms; T1-TrpRS and T2-TrpRS.

The protein resides in the cytoplasm. The enzyme catalyses tRNA(Trp) + L-tryptophan + ATP = L-tryptophyl-tRNA(Trp) + AMP + diphosphate + H(+). In terms of biological role, catalyzes the attachment of tryptophan to tRNA(Trp) in a two-step reaction: tryptophan is first activated by ATP to form Trp-AMP and then transferred to the acceptor end of the tRNA(Trp). Could also possess an angiostatic activity. In Oryctolagus cuniculus (Rabbit), this protein is Tryptophan--tRNA ligase, cytoplasmic (WARS1).